Reading from the N-terminus, the 96-residue chain is Co-chaperonin GroES (96 aa).

The protein belongs to the GroES chaperonin family. In terms of assembly, heptamer of 7 subunits arranged in a ring. Interacts with the chaperonin GroEL.

Its subcellular location is the cytoplasm. Its function is as follows. Together with the chaperonin GroEL, plays an essential role in assisting protein folding. The GroEL-GroES system forms a nano-cage that allows encapsulation of the non-native substrate proteins and provides a physical environment optimized to promote and accelerate protein folding. GroES binds to the apical surface of the GroEL ring, thereby capping the opening of the GroEL channel. This chain is Co-chaperonin GroES, found in Geotalea daltonii (strain DSM 22248 / JCM 15807 / FRC-32) (Geobacter daltonii).